Reading from the N-terminus, the 199-residue chain is ATP-dependent Clp protease proteolytic subunit (199 aa).

Serine 102 functions as the Nucleophile in the catalytic mechanism. The active site involves histidine 127.

This sequence belongs to the peptidase S14 family. In terms of assembly, component of the chloroplastic Clp protease core complex.

Its subcellular location is the plastid. The protein resides in the chloroplast stroma. It catalyses the reaction Hydrolysis of proteins to small peptides in the presence of ATP and magnesium. alpha-casein is the usual test substrate. In the absence of ATP, only oligopeptides shorter than five residues are hydrolyzed (such as succinyl-Leu-Tyr-|-NHMec, and Leu-Tyr-Leu-|-Tyr-Trp, in which cleavage of the -Tyr-|-Leu- and -Tyr-|-Trp bonds also occurs).. Cleaves peptides in various proteins in a process that requires ATP hydrolysis. Has a chymotrypsin-like activity. Plays a major role in the degradation of misfolded proteins. This chain is ATP-dependent Clp protease proteolytic subunit, found in Physcomitrium patens (Spreading-leaved earth moss).